The sequence spans 197 residues: Protein-S-isoprenylcysteine O-methyltransferase A (197 aa).

3 consecutive transmembrane segments (helical) span residues 16–36 (MLLS…TIHG), 52–72 (ALAM…FPGL), and 81–101 (FGLI…ITAG). Residues 116 to 119 (HGLV), Tyr124, and 129 to 132 (HPSY) contribute to the S-adenosyl-L-methionine site. A helical transmembrane segment spans residues 140–160 (VGTQVMLCNPVSAVAFAVVVW). Arg166 lines the substrate pocket. Glu170 provides a ligand contact to S-adenosyl-L-methionine.

This sequence belongs to the class VI-like SAM-binding methyltransferase superfamily. Isoprenylcysteine carboxyl methyltransferase family. It depends on Zn(2+) as a cofactor. As to expression, expressed primarily in flowers, stems, leaves and roots. Almost not expressed in siliques. Detected in root tips and vascular tissues of roots, cotyledons, petiols, hypocotyls, filaments, pollen grains and the distal and proximal portions of the gynoecium.

It localises to the endoplasmic reticulum membrane. The catalysed reaction is [protein]-C-terminal S-[(2E,6E)-farnesyl]-L-cysteine + S-adenosyl-L-methionine = [protein]-C-terminal S-[(2E,6E)-farnesyl]-L-cysteine methyl ester + S-adenosyl-L-homocysteine. Its activity is regulated as follows. Inhibited by farnesylthioacetic acid (FTAA) and N-acetyl-S-trans, trans-farnesyl-l-cysteine (AFC). Catalyzes the post-translational methylation of isoprenylated C-terminal cysteine residues, resulting in the modulation of the function of prenylated proteins. Involved in negative regulation of abscisic acid signaling. Carboxyl methylation is a reversible and potentially regulated step in the post-translational modification of prenylated proteins. The chain is Protein-S-isoprenylcysteine O-methyltransferase A from Arabidopsis thaliana (Mouse-ear cress).